Here is an 82-residue protein sequence, read N- to C-terminus: ATP synthase subunit c (82 aa).

A run of 2 helical transmembrane segments spans residues 5 to 25 (IASA…IGPG) and 57 to 77 (LAFM…LLFA).

Belongs to the ATPase C chain family. As to quaternary structure, F-type ATPases have 2 components, F(1) - the catalytic core - and F(0) - the membrane proton channel. F(1) has five subunits: alpha(3), beta(3), gamma(1), delta(1), epsilon(1). F(0) has four main subunits: a(1), b(1), b'(1) and c(10-14). The alpha and beta chains form an alternating ring which encloses part of the gamma chain. F(1) is attached to F(0) by a central stalk formed by the gamma and epsilon chains, while a peripheral stalk is formed by the delta, b and b' chains.

It localises to the cellular thylakoid membrane. Functionally, f(1)F(0) ATP synthase produces ATP from ADP in the presence of a proton or sodium gradient. F-type ATPases consist of two structural domains, F(1) containing the extramembraneous catalytic core and F(0) containing the membrane proton channel, linked together by a central stalk and a peripheral stalk. During catalysis, ATP synthesis in the catalytic domain of F(1) is coupled via a rotary mechanism of the central stalk subunits to proton translocation. Key component of the F(0) channel; it plays a direct role in translocation across the membrane. A homomeric c-ring of between 10-14 subunits forms the central stalk rotor element with the F(1) delta and epsilon subunits. This chain is ATP synthase subunit c, found in Cyanothece sp. (strain PCC 7425 / ATCC 29141).